A 208-amino-acid chain; its full sequence is Protein-L-isoaspartate O-methyltransferase (208 aa).

The active site involves Ser-59.

It belongs to the methyltransferase superfamily. L-isoaspartyl/D-aspartyl protein methyltransferase family.

It is found in the cytoplasm. It carries out the reaction [protein]-L-isoaspartate + S-adenosyl-L-methionine = [protein]-L-isoaspartate alpha-methyl ester + S-adenosyl-L-homocysteine. In terms of biological role, catalyzes the methyl esterification of L-isoaspartyl residues in peptides and proteins that result from spontaneous decomposition of normal L-aspartyl and L-asparaginyl residues. It plays a role in the repair and/or degradation of damaged proteins. The chain is Protein-L-isoaspartate O-methyltransferase from Vibrio cholerae serotype O1 (strain ATCC 39541 / Classical Ogawa 395 / O395).